The following is a 401-amino-acid chain: cAMP-dependent protein kinase type II-alpha regulatory subunit (401 aa).

At S2 the chain carries N-acetylserine. The tract at residues 2–135 (SHIQIPPGLT…RLQEACKDIL (134 aa)) is dimerization and phosphorylation. Phosphoserine occurs at positions 47, 74, 76, and 96. Positions 61-83 (ESSAVPVIEEDGESDSDSEDADL) are disordered. Over residues 68-83 (IEEDGESDSDSEDADL) the composition is skewed to acidic residues. 3',5'-cyclic AMP contacts are provided by residues 136–257 (LFKN…ESVP), E205, R214, 258–401 (LFKS…DPGQ), E335, and R344. Residue T212 is modified to Phosphothreonine; by PDPK1. S347 and S392 each carry phosphoserine.

Belongs to the cAMP-dependent kinase regulatory chain family. As to quaternary structure, the inactive form of the enzyme is composed of two regulatory chains and two catalytic chains. Activation by cAMP produces two active catalytic monomers and a regulatory dimer that binds four cAMP molecules. Interacts with AKAP4. Interacts with CBFA2T3. Interacts with the phosphorylated form of PJA2. Interacts with MYRIP. This interaction may link PKA to components of the exocytosis machinery, thus facilitating exocytosis, including insulin release. Forms a complex composed of PRKAR2A, GSK3B and GSKIP through GSKIP interaction; facilitates PKA-induced phosphorylation and regulates GSK3B activity. Interacts with ADCY8; inhibits adenylate cyclase activity through PKA phosphorylation. Phosphorylated by the activated catalytic chain. Four types of regulatory chains are found: I-alpha, I-beta, II-alpha, and II-beta. Their expression varies among tissues and is in some cases constitutive and in others inducible.

Its subcellular location is the cytoplasm. It is found in the cell membrane. Its function is as follows. Regulatory subunit of the cAMP-dependent protein kinases involved in cAMP signaling in cells. Type II regulatory chains mediate membrane association by binding to anchoring proteins, including the MAP2 kinase. This Mus musculus (Mouse) protein is cAMP-dependent protein kinase type II-alpha regulatory subunit (Prkar2a).